Here is a 122-residue protein sequence, read N- to C-terminus: Large ribosomal subunit protein uL18 (122 aa).

It belongs to the universal ribosomal protein uL18 family. Part of the 50S ribosomal subunit; part of the 5S rRNA/L5/L18/L25 subcomplex. Contacts the 5S and 23S rRNAs.

Its function is as follows. This is one of the proteins that bind and probably mediate the attachment of the 5S RNA into the large ribosomal subunit, where it forms part of the central protuberance. The sequence is that of Large ribosomal subunit protein uL18 from Agathobacter rectalis (strain ATCC 33656 / DSM 3377 / JCM 17463 / KCTC 5835 / VPI 0990) (Eubacterium rectale).